The chain runs to 296 residues: MAMVQPKSQKLRLLITHLGLLIFIAAIMFPLLMVIAISLREGNFATGSLIPDKISWEHWRLALGFSVEHADGRVTPPPFPVLLWLWNSVKIAGITAIGIVALSTTCAYAFARMRFPGKATLLKGMLIFQMFPAVLSLVALYALFDRLGQYIPFIGLNTHGGVIFAYLGGIALHVWTIKGYFETIDSSLEEAAALDGATPWQAFRLVLLPLSVPILAVVFILSFIAAITEVPVASLLLRDVDSYTLAVGMQQYLNPQNYLWGDFAAAAVLSAIPITLVFLLAQRWLVNGLTAGGVKG.

At 1-12 the chain is on the cytoplasmic side; the sequence is MAMVQPKSQKLR. A helical transmembrane segment spans residues 13–35; the sequence is LLITHLGLLIFIAAIMFPLLMVI. The Periplasmic portion of the chain corresponds to 36-88; that stretch reads AISLREGNFATGSLIPDKISWEHWRLALGFSVEHADGRVTPPPFPVLLWLWNS. The 197-residue stretch at 85 to 281 folds into the ABC transmembrane type-1 domain; that stretch reads LWNSVKIAGI…IPITLVFLLA (197 aa). Residues 89-111 form a helical membrane-spanning segment; sequence VKIAGITAIGIVALSTTCAYAFA. The Cytoplasmic segment spans residues 112–123; the sequence is RMRFPGKATLLK. Residues 124 to 143 traverse the membrane as a helical segment; sequence GMLIFQMFPAVLSLVALYAL. The Periplasmic segment spans residues 144–152; it reads FDRLGQYIP. Residues 153-175 traverse the membrane as a helical segment; sequence FIGLNTHGGVIFAYLGGIALHVW. At 176-204 the chain is on the cytoplasmic side; the sequence is TIKGYFETIDSSLEEAAALDGATPWQAFR. Residues 205–227 form a helical membrane-spanning segment; sequence LVLLPLSVPILAVVFILSFIAAI. Residues 228-257 are Periplasmic-facing; it reads TEVPVASLLLRDVDSYTLAVGMQQYLNPQN. Residues 258-280 traverse the membrane as a helical segment; that stretch reads YLWGDFAAAAVLSAIPITLVFLL. Residues 281-296 are Cytoplasmic-facing; it reads AQRWLVNGLTAGGVKG.

Belongs to the binding-protein-dependent transport system permease family. MalFG subfamily. As to quaternary structure, the complex is composed of two ATP-binding proteins (MalK), two transmembrane proteins (MalG and MalF) and a solute-binding protein (MalE).

The protein localises to the cell inner membrane. Part of the ABC transporter complex MalEFGK involved in maltose/maltodextrin import. Probably responsible for the translocation of the substrate across the membrane. The polypeptide is Maltose/maltodextrin transport system permease protein MalG (malG) (Salmonella typhimurium (strain LT2 / SGSC1412 / ATCC 700720)).